Here is a 701-residue protein sequence, read N- to C-terminus: Elongation factor G (701 aa).

In terms of domain architecture, tr-type G spans 11 to 287 (SRVRNFGIMA…AVVDYLPSPL (277 aa)). Residues 20 to 27 (AHIDAGKT), 84 to 88 (DTPGH), and 138 to 141 (NKMD) each bind GTP.

This sequence belongs to the TRAFAC class translation factor GTPase superfamily. Classic translation factor GTPase family. EF-G/EF-2 subfamily.

It localises to the cytoplasm. Functionally, catalyzes the GTP-dependent ribosomal translocation step during translation elongation. During this step, the ribosome changes from the pre-translocational (PRE) to the post-translocational (POST) state as the newly formed A-site-bound peptidyl-tRNA and P-site-bound deacylated tRNA move to the P and E sites, respectively. Catalyzes the coordinated movement of the two tRNA molecules, the mRNA and conformational changes in the ribosome. This chain is Elongation factor G (fusA), found in Mycobacterium tuberculosis (strain CDC 1551 / Oshkosh).